The chain runs to 1291 residues: Cytoplasmic FMR1-interacting protein (1291 aa).

The segment at His1269 to Asn1291 is disordered. Residues Ser1271–Asn1291 are compositionally biased toward polar residues.

Belongs to the CYFIP family. Interacts with Fmr1 and Rac1. Component of the WAVE complex composed of Hem/Kette, Scar/Wave and Cyfip where it binds through its C-terminus directly to Hem.

The protein localises to the cytoplasm. In terms of biological role, plays a role in guidance and morphology of central and peripheral axons and in synaptic morphology. Also required for formation of cell membrane protrusions and for bristle development. The polypeptide is Cytoplasmic FMR1-interacting protein (Drosophila pseudoobscura pseudoobscura (Fruit fly)).